Here is a 472-residue protein sequence, read N- to C-terminus: Probable glycine dehydrogenase (decarboxylating) subunit 2 (472 aa).

An N6-(pyridoxal phosphate)lysine modification is found at Lys268.

The protein belongs to the GcvP family. C-terminal subunit subfamily. The glycine cleavage system is composed of four proteins: P, T, L and H. In this organism, the P 'protein' is a heterodimer of two subunits. It depends on pyridoxal 5'-phosphate as a cofactor.

It carries out the reaction N(6)-[(R)-lipoyl]-L-lysyl-[glycine-cleavage complex H protein] + glycine + H(+) = N(6)-[(R)-S(8)-aminomethyldihydrolipoyl]-L-lysyl-[glycine-cleavage complex H protein] + CO2. Its function is as follows. The glycine cleavage system catalyzes the degradation of glycine. The P protein binds the alpha-amino group of glycine through its pyridoxal phosphate cofactor; CO(2) is released and the remaining methylamine moiety is then transferred to the lipoamide cofactor of the H protein. The sequence is that of Probable glycine dehydrogenase (decarboxylating) subunit 2 from Thermoplasma volcanium (strain ATCC 51530 / DSM 4299 / JCM 9571 / NBRC 15438 / GSS1).